A 338-amino-acid polypeptide reads, in one-letter code: Methionyl-tRNA formyltransferase (338 aa).

110–113 lines the (6S)-5,6,7,8-tetrahydrofolate pocket; it reads SLLP.

This sequence belongs to the Fmt family.

It catalyses the reaction L-methionyl-tRNA(fMet) + (6R)-10-formyltetrahydrofolate = N-formyl-L-methionyl-tRNA(fMet) + (6S)-5,6,7,8-tetrahydrofolate + H(+). Attaches a formyl group to the free amino group of methionyl-tRNA(fMet). The formyl group appears to play a dual role in the initiator identity of N-formylmethionyl-tRNA by promoting its recognition by IF2 and preventing the misappropriation of this tRNA by the elongation apparatus. This Parasynechococcus marenigrum (strain WH8102) protein is Methionyl-tRNA formyltransferase.